The primary structure comprises 218 residues: MSIGILGKKLGMSQFFDEQGRAVPVTLIEAGPCRITQLKSSDTDGYAAVQIGFGDTREKLINKPAKGHLNKTGETLLRHLREYRVDGLDGFELGGSITVGDFEAGQKVDVSGDTIGRGFSGYQKRHGFSRGPMTHGSKNHREPGSIGPGTTPGRIYPGKRMAGRYGGKKITTRGLTILKVDSERNLLVVKGSVPGKPGALLNIRPALRVGAKPAKGGQ.

The tract at residues 121–163 (GYQKRHGFSRGPMTHGSKNHREPGSIGPGTTPGRIYPGKRMAG) is disordered.

It belongs to the universal ribosomal protein uL3 family. In terms of assembly, part of the 50S ribosomal subunit. Forms a cluster with proteins L14 and L19.

Its function is as follows. One of the primary rRNA binding proteins, it binds directly near the 3'-end of the 23S rRNA, where it nucleates assembly of the 50S subunit. This is Large ribosomal subunit protein uL3 from Parasynechococcus marenigrum (strain WH8102).